We begin with the raw amino-acid sequence, 448 residues long: D-inositol 3-phosphate glycosyltransferase (448 aa).

Residues His35, 46–51 (DAGGLN), Lys104, Tyr137, Thr161, and Arg181 each bind 1D-myo-inositol 3-phosphate. Gly49 is a binding site for UDP-N-acetyl-alpha-D-glucosamine. UDP-N-acetyl-alpha-D-glucosamine-binding residues include Arg255, Lys260, and Met321. Mg(2+) contacts are provided by Tyr330, Arg331, and Ala333. UDP-N-acetyl-alpha-D-glucosamine-binding residues include Glu343 and Glu351. Residue Thr357 participates in Mg(2+) binding.

This sequence belongs to the glycosyltransferase group 1 family. MshA subfamily. Homodimer.

The enzyme catalyses 1D-myo-inositol 3-phosphate + UDP-N-acetyl-alpha-D-glucosamine = 1D-myo-inositol 2-acetamido-2-deoxy-alpha-D-glucopyranoside 3-phosphate + UDP + H(+). In terms of biological role, catalyzes the transfer of a N-acetyl-glucosamine moiety to 1D-myo-inositol 3-phosphate to produce 1D-myo-inositol 2-acetamido-2-deoxy-glucopyranoside 3-phosphate in the mycothiol biosynthesis pathway. The sequence is that of D-inositol 3-phosphate glycosyltransferase from Acidothermus cellulolyticus (strain ATCC 43068 / DSM 8971 / 11B).